A 225-amino-acid polypeptide reads, in one-letter code: THAP domain-containing protein 1 A (225 aa).

The THAP-type zinc finger occupies Cys-5–His-57. The stretch at Val-139–Gly-194 forms a coiled coil.

This sequence belongs to the THAP1 family.

The protein resides in the nucleus. It is found in the nucleoplasm. DNA-binding transcription regulator that regulates endothelial cell proliferation and G1/S cell-cycle progression. Specifically binds the 5'-[AT]NTNN[GT]GGCA[AGT]-3' core DNA sequence and acts by modulating expression of pRB-E2F cell-cycle target genes. The protein is THAP domain-containing protein 1 A (thap1-a) of Xenopus laevis (African clawed frog).